A 92-amino-acid chain; its full sequence is Small ribosomal subunit protein uS19 (92 aa).

The protein belongs to the universal ribosomal protein uS19 family.

Protein S19 forms a complex with S13 that binds strongly to the 16S ribosomal RNA. This Allorhizobium ampelinum (strain ATCC BAA-846 / DSM 112012 / S4) (Agrobacterium vitis (strain S4)) protein is Small ribosomal subunit protein uS19.